Consider the following 351-residue polypeptide: Transmembrane protein 184 homolog DDB_G0279555 (351 aa).

Residues 1–21 (MWIVAGVCSGVAILLSFYLIY) traverse the membrane as a helical segment. N-linked (GlcNAc...) asparagine glycosylation occurs at asparagine 26. 5 helical membrane passes run 39 to 59 (ILIM…FVEL), 73 to 93 (YVLY…FDLV), 127 to 147 (FVLQ…VLET), 162 to 182 (YVWL…FLVL), and 206 to 226 (ILFF…FGVI). Asparagine 236 is a glycosylation site (N-linked (GlcNAc...) asparagine). Residues 241-261 (LQDFITCVEMVILAICHHFFF) traverse the membrane as a helical segment. N-linked (GlcNAc...) asparagine glycans are attached at residues asparagine 301 and asparagine 304. Residues 327–351 (HNHPTTKKKDEESNLLEPEDKDIII) are disordered. The span at 339 to 351 (SNLLEPEDKDIII) shows a compositional bias: acidic residues.

It belongs to the TMEM184 family.

Its subcellular location is the cell membrane. Its function is as follows. Probable transporter. The protein is Transmembrane protein 184 homolog DDB_G0279555 (tmem184C) of Dictyostelium discoideum (Social amoeba).